Here is a 96-residue protein sequence, read N- to C-terminus: uncharacterized protein (96 aa).

Transmembrane regions (helical) follow at residues 3-23 (KLTIFSGGLGAVFSVLAQLFA), 30-50 (TLGNLWFLGALAGIITMLASI), and 68-88 (IGLLGTGLVYIIPTLFNIIII).

It is found in the cell membrane. This is an uncharacterized protein from Bacillus subtilis (strain 168).